Reading from the N-terminus, the 69-residue chain is Small, acid-soluble spore protein C1 (69 aa).

Belongs to the alpha/beta-type SASP family.

SASP are bound to spore DNA. They are double-stranded DNA-binding proteins that cause DNA to change to an a-like conformation. They protect the DNA backbone from chemical and enzymatic cleavage and are thus involved in dormant spore's high resistance to UV light. The sequence is that of Small, acid-soluble spore protein C1 (SASP-C1) from Priestia megaterium (Bacillus megaterium).